We begin with the raw amino-acid sequence, 233 residues long: DNA repair protein RecO (233 aa).

It belongs to the RecO family.

Its function is as follows. Involved in DNA repair and RecF pathway recombination. The protein is DNA repair protein RecO of Francisella philomiragia subsp. philomiragia (strain ATCC 25017 / CCUG 19701 / FSC 153 / O#319-036).